Here is a 254-residue protein sequence, read N- to C-terminus: Isoprenyl transferase (254 aa).

The active site involves aspartate 12. Aspartate 12 is a binding site for Mg(2+). Residues 13 to 16, tryptophan 17, arginine 25, histidine 29, and 57 to 59 contribute to the substrate site; these read GNGR and SSE. Residue asparagine 60 is the Proton acceptor of the active site. Substrate-binding positions include tryptophan 61, arginine 63, arginine 180, and 186–188; that span reads RLS. Residue glutamate 199 participates in Mg(2+) binding.

The protein belongs to the UPP synthase family. As to quaternary structure, homodimer. The cofactor is Mg(2+).

In terms of biological role, catalyzes the condensation of isopentenyl diphosphate (IPP) with allylic pyrophosphates generating different type of terpenoids. In Brucella abortus biovar 1 (strain 9-941), this protein is Isoprenyl transferase.